The chain runs to 298 residues: 4-diphosphocytidyl-2-C-methyl-D-erythritol kinase (298 aa).

K25 is a catalytic residue. Residue 109–119 participates in ATP binding; sequence PVGGGFGGGSS. The active site involves D151.

Belongs to the GHMP kinase family. IspE subfamily.

The enzyme catalyses 4-CDP-2-C-methyl-D-erythritol + ATP = 4-CDP-2-C-methyl-D-erythritol 2-phosphate + ADP + H(+). The protein operates within isoprenoid biosynthesis; isopentenyl diphosphate biosynthesis via DXP pathway; isopentenyl diphosphate from 1-deoxy-D-xylulose 5-phosphate: step 3/6. Its function is as follows. Catalyzes the phosphorylation of the position 2 hydroxy group of 4-diphosphocytidyl-2C-methyl-D-erythritol. The protein is 4-diphosphocytidyl-2-C-methyl-D-erythritol kinase of Xylella fastidiosa (strain 9a5c).